The primary structure comprises 370 residues: 3-isopropylmalate dehydrogenase (370 aa).

77-90 (GPKWDSVPYEVRPE) is a binding site for NAD(+). The substrate site is built by arginine 97, arginine 107, arginine 135, and aspartate 226. Positions 226, 250, and 254 each coordinate Mg(2+). 290–302 (GSAPDIAGKGIAN) provides a ligand contact to NAD(+).

Belongs to the isocitrate and isopropylmalate dehydrogenases family. LeuB type 1 subfamily. In terms of assembly, homodimer. The cofactor is Mg(2+). It depends on Mn(2+) as a cofactor.

The protein localises to the cytoplasm. The catalysed reaction is (2R,3S)-3-isopropylmalate + NAD(+) = 4-methyl-2-oxopentanoate + CO2 + NADH. It functions in the pathway amino-acid biosynthesis; L-leucine biosynthesis; L-leucine from 3-methyl-2-oxobutanoate: step 3/4. Its function is as follows. Catalyzes the oxidation of 3-carboxy-2-hydroxy-4-methylpentanoate (3-isopropylmalate) to 3-carboxy-4-methyl-2-oxopentanoate. The product decarboxylates to 4-methyl-2 oxopentanoate. The chain is 3-isopropylmalate dehydrogenase from Rhizobium etli (strain ATCC 51251 / DSM 11541 / JCM 21823 / NBRC 15573 / CFN 42).